We begin with the raw amino-acid sequence, 156 residues long: 3-dehydroquinate dehydratase (156 aa).

The Proton acceptor role is filled by tyrosine 31. Residues asparagine 83, histidine 89, and aspartate 96 each coordinate substrate. Histidine 109 acts as the Proton donor in catalysis. Residues 110 to 111 and arginine 120 contribute to the substrate site; that span reads LS.

Belongs to the type-II 3-dehydroquinase family. In terms of assembly, homododecamer.

The catalysed reaction is 3-dehydroquinate = 3-dehydroshikimate + H2O. Its pathway is metabolic intermediate biosynthesis; chorismate biosynthesis; chorismate from D-erythrose 4-phosphate and phosphoenolpyruvate: step 3/7. Functionally, catalyzes a trans-dehydration via an enolate intermediate. This chain is 3-dehydroquinate dehydratase, found in Chromobacterium violaceum (strain ATCC 12472 / DSM 30191 / JCM 1249 / CCUG 213 / NBRC 12614 / NCIMB 9131 / NCTC 9757 / MK).